Consider the following 34-residue polypeptide: Potassium channel toxin alpha-KTx 18.2 (34 aa).

3 disulfide bridges follow: cysteine 7/cysteine 26, cysteine 12/cysteine 31, and cysteine 16/cysteine 33.

Expressed by the venom gland.

The protein localises to the secreted. Functionally, reversibly blocks Shaker B potassium channels. In Tityus discrepans (Venezuelan scorpion), this protein is Potassium channel toxin alpha-KTx 18.2.